We begin with the raw amino-acid sequence, 61 residues long: MAKKSMIAKQKRTPKFKVRAYTRCERCGRPHSVYRKFKLCRICFRELAYKGQLPGIKKASW.

4 residues coordinate Zn(2+): cysteine 24, cysteine 27, cysteine 40, and cysteine 43.

It belongs to the universal ribosomal protein uS14 family. Zinc-binding uS14 subfamily. In terms of assembly, part of the 30S ribosomal subunit. Contacts proteins S3 and S10. It depends on Zn(2+) as a cofactor.

Its function is as follows. Binds 16S rRNA, required for the assembly of 30S particles and may also be responsible for determining the conformation of the 16S rRNA at the A site. The sequence is that of Small ribosomal subunit protein uS14 from Geobacillus thermodenitrificans (strain NG80-2).